The following is a 143-amino-acid chain: Pollen allergen Phl p 11 (143 aa).

Cystine bridges form between Cys14–Cys85, Cys17–Cys127, and Cys38–Cys73. N-linked (GlcNAc...) asparagine glycosylation is present at Asn24.

The protein belongs to the Ole e I family.

The protein resides in the secreted. This Phleum pratense (Common timothy) protein is Pollen allergen Phl p 11.